The primary structure comprises 251 residues: Methylthioribulose-1-phosphate dehydratase (251 aa).

The interval 1-26 is disordered; sequence MTSVCDATNEDKENGSESTESQDKEH. Positions 9 to 26 are enriched in basic and acidic residues; it reads NEDKENGSESTESQDKEH. Residue cysteine 100 participates in substrate binding. 2 residues coordinate Zn(2+): histidine 118 and histidine 120. Residue glutamate 142 is the Proton donor/acceptor of the active site. Histidine 198 serves as a coordination point for Zn(2+). Residues 232–251 form a disordered region; the sequence is MDPSAPPIEENHYYDVQQSQ.

This sequence belongs to the aldolase class II family. MtnB subfamily. The cofactor is Zn(2+).

It localises to the cytoplasm. The enzyme catalyses 5-(methylsulfanyl)-D-ribulose 1-phosphate = 5-methylsulfanyl-2,3-dioxopentyl phosphate + H2O. It participates in amino-acid biosynthesis; L-methionine biosynthesis via salvage pathway; L-methionine from S-methyl-5-thio-alpha-D-ribose 1-phosphate: step 2/6. Its function is as follows. Catalyzes the dehydration of methylthioribulose-1-phosphate (MTRu-1-P) into 2,3-diketo-5-methylthiopentyl-1-phosphate (DK-MTP-1-P). Functions in the methionine salvage pathway. May play a role in apoptosis. The protein is Methylthioribulose-1-phosphate dehydratase of Salmo salar (Atlantic salmon).